Consider the following 140-residue polypeptide: Endoribonuclease YbeY (140 aa).

Zn(2+)-binding residues include His105, His109, and Asp115.

It belongs to the endoribonuclease YbeY family. The cofactor is Zn(2+).

The protein resides in the cytoplasm. Single strand-specific metallo-endoribonuclease involved in late-stage 70S ribosome quality control and in maturation of the 3' terminus of the 16S rRNA. In Flavobacterium psychrophilum (strain ATCC 49511 / DSM 21280 / CIP 103535 / JIP02/86), this protein is Endoribonuclease YbeY.